We begin with the raw amino-acid sequence, 301 residues long: Small ribosomal subunit biogenesis GTPase RsgA (301 aa).

One can recognise a CP-type G domain in the interval 63-224 (INALVRPPIA…IADTPGFSSY (162 aa)). GTP is bound by residues 112–115 (SKAD) and 167–175 (GQTGAGKST). Positions 248, 253, 255, and 261 each coordinate Zn(2+).

Belongs to the TRAFAC class YlqF/YawG GTPase family. RsgA subfamily. In terms of assembly, monomer. Associates with 30S ribosomal subunit, binds 16S rRNA. Requires Zn(2+) as cofactor.

The protein resides in the cytoplasm. In terms of biological role, one of several proteins that assist in the late maturation steps of the functional core of the 30S ribosomal subunit. Helps release RbfA from mature subunits. May play a role in the assembly of ribosomal proteins into the subunit. Circularly permuted GTPase that catalyzes slow GTP hydrolysis, GTPase activity is stimulated by the 30S ribosomal subunit. This chain is Small ribosomal subunit biogenesis GTPase RsgA, found in Leuconostoc citreum (strain KM20).